A 120-amino-acid polypeptide reads, in one-letter code: NAD(P)H-quinone oxidoreductase subunit 3, chloroplastic (120 aa).

Helical transmembrane passes span 9 to 29, 64 to 84, and 88 to 108; these read IFWA…IISG, MFAL…PWAV, and VLGV…VVGS.

This sequence belongs to the complex I subunit 3 family. NDH is composed of at least 16 different subunits, 5 of which are encoded in the nucleus.

The protein resides in the plastid. The protein localises to the chloroplast thylakoid membrane. The enzyme catalyses a plastoquinone + NADH + (n+1) H(+)(in) = a plastoquinol + NAD(+) + n H(+)(out). It catalyses the reaction a plastoquinone + NADPH + (n+1) H(+)(in) = a plastoquinol + NADP(+) + n H(+)(out). In terms of biological role, NDH shuttles electrons from NAD(P)H:plastoquinone, via FMN and iron-sulfur (Fe-S) centers, to quinones in the photosynthetic chain and possibly in a chloroplast respiratory chain. The immediate electron acceptor for the enzyme in this species is believed to be plastoquinone. Couples the redox reaction to proton translocation, and thus conserves the redox energy in a proton gradient. The polypeptide is NAD(P)H-quinone oxidoreductase subunit 3, chloroplastic (Nuphar advena (Common spatterdock)).